A 181-amino-acid polypeptide reads, in one-letter code: Protein AC41 (181 aa).

Functionally, plays a role in late gene expression. The polypeptide is Protein AC41 (AC41) (Autographa californica nuclear polyhedrosis virus (AcMNPV)).